The chain runs to 314 residues: Peroxisome biogenesis factor 10 (314 aa).

The Peroxisomal matrix segment spans residues 1–7; it reads MNTYVAE. The chain crosses the membrane as a helical span at residues 8 to 37; it reads IGEIVRSQRRDEEYIEDITERLSRVSKELL. Position 38 (Gly-38) is a topological domain, cytoplasmic. A helical membrane pass occupies residues 39 to 60; that stretch reads QRTWIRWFPYLKSIASTLYYTS. The Peroxisomal matrix segment spans residues 61–90; the sequence is TVVLGNQTLGEEYVHLFESNGLERTVPSIP. Residues 91–110 form a helical membrane-spanning segment; that stretch reads SRISFVLLHSAFPLISNYLI. The Cytoplasmic portion of the chain corresponds to 111–142; that stretch reads QKAESTLTHPSTESFLGIPIRKNQKARQSFLD. Residues 143–166 form a helical membrane-spanning segment; the sequence is VFFWLRTKLFPQLQRAHIALFYIT. The Peroxisomal matrix segment spans residues 167-197; that stretch reads GAYYSIARRFTGIRFLSASAHSDIPALKVYR. Residues 198–218 form a helical membrane-spanning segment; the sequence is FLGYITLIQLAVSIGISLYSF. Residues 219 to 314 are Cytoplasmic-facing; sequence LEQEKFNNKL…PRDVTPLLNL (96 aa). The Zn(2+) site is built by Cys-255, Cys-258, Cys-269, His-271, Cys-274, Cys-277, Cys-296, and Cys-299. An RING-type zinc finger spans residues 255–300; it reads CSICLENKNPSALFCGHLFCWTCIQEHAVAATSSASTSSARCPQCR.

The protein belongs to the pex2/pex10/pex12 family. As to quaternary structure, component of the PEX2-PEX10-PEX12 retrotranslocation channel.

Its subcellular location is the peroxisome membrane. It catalyses the reaction S-ubiquitinyl-[E2 ubiquitin-conjugating enzyme]-L-cysteine + [acceptor protein]-L-lysine = [E2 ubiquitin-conjugating enzyme]-L-cysteine + N(6)-ubiquitinyl-[acceptor protein]-L-lysine.. The protein operates within protein modification; protein ubiquitination. With respect to regulation, the E3 ubiquitin-protein ligase activity is stimulated by PEX12/prx-12. Its function is as follows. E3 ubiquitin-protein ligase component of a retrotranslocation channel required for peroxisome organization by mediating export of the PEX5/prx-5 receptor from peroxisomes to the cytosol, thereby promoting PEX5/prx-5 recycling. The retrotranslocation channel is composed of PEX2/prx-2, PEX10/prx-10 and PEX12/prx-12; each subunit contributing transmembrane segments that coassemble into an open channel that specifically allows the passage of PEX5/prx-5 through the peroxisomal membrane. PEX10/prx-10 also regulates PEX5 recycling by acting as a E3 ubiquitin-protein ligase. When PEX5/prx-5 recycling is compromised, PEX10/prx-10 catalyzes polyubiquitination of PEX5/prx-5 during its passage through the retrotranslocation channel, leading to its degradation. This chain is Peroxisome biogenesis factor 10, found in Caenorhabditis elegans.